The sequence spans 586 residues: NADH-quinone oxidoreductase subunit C/D 2 (586 aa).

The NADH dehydrogenase I subunit C stretch occupies residues 1 to 173 (MKWVNKGTVE…RTDPPSHDFE (173 aa)). An NADH dehydrogenase I subunit D region spans residues 197–586 (AELVLNWGPL…LDPVVGETDR (390 aa)).

It in the N-terminal section; belongs to the complex I 30 kDa subunit family. In the C-terminal section; belongs to the complex I 49 kDa subunit family. As to quaternary structure, NDH-1 is composed of 13 different subunits. Subunits NuoB, CD, E, F, and G constitute the peripheral sector of the complex.

Its subcellular location is the cell inner membrane. The enzyme catalyses a quinone + NADH + 5 H(+)(in) = a quinol + NAD(+) + 4 H(+)(out). Its function is as follows. NDH-1 shuttles electrons from NADH, via FMN and iron-sulfur (Fe-S) centers, to quinones in the respiratory chain. The immediate electron acceptor for the enzyme in this species is believed to be ubiquinone. Couples the redox reaction to proton translocation (for every two electrons transferred, four hydrogen ions are translocated across the cytoplasmic membrane), and thus conserves the redox energy in a proton gradient. In Aquifex aeolicus (strain VF5), this protein is NADH-quinone oxidoreductase subunit C/D 2 (nuoC2).